The following is a 1555-amino-acid chain: Pre-mRNA cleavage complex 2 protein Pcf11 (1555 aa).

Ser-2 is subject to N-acetylserine. A CID domain is found at 14-142; sequence AREDACRDYQ…ALDVRVNSLD (129 aa). Residue Ser-120 is modified to Phosphoserine; by WNK1. Thr-121 is modified (phosphothreonine; by WNK1). Residues 167-186 form a disordered region; sequence NKSPEEPSTPGTVVSSPSIS. Ser-169 and Ser-182 each carry phosphoserine. Low complexity predominate over residues 174 to 186; the sequence is STPGTVVSSPSIS. Residues 202-239 are a coiled coil; it reads QLIRQQLLAKQKQLLELQQKKLELELEQAKAQLAVSLS. The interval 266–648 is disordered; that stretch reads VKAPHQVPVQ…QQQHRLSVDA (383 aa). Lys-291 participates in a covalent cross-link: Glycyl lysine isopeptide (Lys-Gly) (interchain with G-Cter in SUMO2). Positions 307 to 317 are enriched in basic and acidic residues; that stretch reads HGKDQSHRKEF. A compositionally biased stretch (polar residues) spans 320-333; that stretch reads NTLNQSDTKTSKTI. Lys-328 is covalently cross-linked (Glycyl lysine isopeptide (Lys-Gly) (interchain with G-Cter in SUMO2)). 3 stretches are compositionally biased toward basic and acidic residues: residues 342–364, 380–421, and 427–442; these read KQEKSKSGEKITKKELDQLDSKS, HTKD…DVKE, and EKKDKDEHMKSSEHRL. Residue Lys-456 forms a Glycyl lysine isopeptide (Lys-Gly) (interchain with G-Cter in SUMO2) linkage. A Phosphothreonine modification is found at Thr-459. Over residues 475–486 the composition is skewed to basic residues; the sequence is STRKRSRSRSPK. Residues Ser-489, Ser-494, Ser-509, and Ser-511 each carry the phosphoserine modification. Residues 494-508 show a composition bias toward basic residues; the sequence is SPKRRDRRSPKRRQR. The span at 529-567 shows a compositional bias: basic and acidic residues; the sequence is SHMEEFTPPSREDRNAKRSTKQDIRDPRRMKKTEEERPQ. Polar residues predominate over residues 568 to 578; the sequence is ETTNQHSTKSG. Over residues 599–615 the composition is skewed to basic and acidic residues; that stretch reads SGWEENKSLQQVDEHSK. Phosphoserine is present on Ser-645. Residue Lys-654 forms a Glycyl lysine isopeptide (Lys-Gly) (interchain with G-Cter in SUMO2) linkage. Ser-705 bears the Phosphoserine mark. Disordered regions lie at residues 707-732 and 749-781; these read FNDRFPLKRPRYEDSDKPFVDSPASR and RPLFDGPSRPSVARDGPTKMIFEGPNKLSPRID. Residues 716–725 are compositionally biased toward basic and acidic residues; the sequence is PRYEDSDKPF. A Glycyl lysine isopeptide (Lys-Gly) (interchain with G-Cter in SUMO2) cross-link involves residue Lys-723. Residues Ser-728 and Ser-777 each carry the phosphoserine modification. Thr-785 is subject to Phosphothreonine. Ser-794 carries the post-translational modification Phosphoserine. Arg-805, Arg-820, and Arg-833 each carry asymmetric dimethylarginine. At Ser-851 the chain carries Phosphoserine. Asymmetric dimethylarginine is present on residues Arg-929, Arg-942, Arg-955, Arg-981, Arg-994, and Arg-1007. A disordered region spans residues 1056-1081; that stretch reads HGQPGPRFERTPGQPGPQRFDGPPGQ. Residues Arg-1093 and Arg-1104 each carry the asymmetric dimethylarginine modification. 2 disordered regions span residues 1127–1147 and 1159–1187; these read VSFNQTGPYNDPPGNAFNAPS and FDSPQGPNFNGPHGPGNQSFSNPLNRASG. The residue at position 1161 (Ser-1161) is a Phosphoserine. Low complexity predominate over residues 1162–1175; the sequence is PQGPNFNGPHGPGN. Lys-1278 participates in a covalent cross-link: Glycyl lysine isopeptide (Lys-Gly) (interchain with G-Cter in SUMO2). Positions 1289–1298 are enriched in polar residues; sequence SATTQVSEVT. The interval 1289–1315 is disordered; the sequence is SATTQVSEVTAQPPPEEEEDQNEDQDV. The segment covering 1303-1315 has biased composition (acidic residues); sequence PEEEEDQNEDQDV. Glycyl lysine isopeptide (Lys-Gly) (interchain with G-Cter in SUMO2) cross-links involve residues Lys-1419, Lys-1511, and Lys-1524. Residues 1516–1555 are disordered; the sequence is EPCDSPKVKEERIDTPPACTEESIATPSEIKTENDTVESV. Residues 1519–1529 show a composition bias toward basic and acidic residues; sequence DSPKVKEERID. Thr-1530 carries the phosphothreonine modification. Lys-1546 participates in a covalent cross-link: Glycyl lysine isopeptide (Lys-Gly) (interchain with G-Cter in SUMO2).

As to quaternary structure, associates with the phosphorylated CTD domain of POLR2A /RNA polymerase II. Post-translationally, phosphorylation at Ser-120 and/or Thr-121 by WNK1 weakens its association with POLR2A/RNA polymerase II, promoting transcript release from the chromatin template and mRNA export to the cytoplasm.

The protein localises to the nucleus. In terms of biological role, component of pre-mRNA cleavage complex II, which promotes transcription termination by RNA polymerase II. The sequence is that of Pre-mRNA cleavage complex 2 protein Pcf11 from Homo sapiens (Human).